Consider the following 465-residue polypeptide: uncharacterized protein (465 aa).

A helical transmembrane segment spans residues 56–76 (ILYMIIFAIFGLLPFLIALIF). The disordered stretch occupies residues 177–198 (KFNKSKKSNKINDKTPILNNNN). A helical membrane pass occupies residues 273–293 (LIFLLVSTILLIALIGFILII). The interval 411–449 (NNYNNSNNNNNSNNSNSNNNNNNNNNNNNYNNNNYNNNN) is disordered.

The protein resides in the membrane. This is an uncharacterized protein from Dictyostelium discoideum (Social amoeba).